Consider the following 152-residue polypeptide: Large ribosomal subunit protein uL15 (152 aa).

Over residues 1–13 (MLTLGNLSPQEGS) the composition is skewed to polar residues. The interval 1 to 62 (MLTLGNLSPQ…GGQMPLQRRL (62 aa)) is disordered. The segment covering 31 to 40 (TAGRGHKGFK) has biased composition (basic residues).

The protein belongs to the universal ribosomal protein uL15 family. As to quaternary structure, part of the 50S ribosomal subunit.

In terms of biological role, binds to the 23S rRNA. The chain is Large ribosomal subunit protein uL15 from Desulfotalea psychrophila (strain LSv54 / DSM 12343).